The chain runs to 344 residues: G-protein coupled receptor str-217 (344 aa).

Topologically, residues 1–10 (MLLFQKTLSR) are extracellular. A helical transmembrane segment spans residues 11 to 31 (VAAPISVAANLILILLIIFKS). Over 32-39 (PAQMGNYK) the chain is Cytoplasmic. The chain crosses the membrane as a helical span at residues 40–60 (YLLIGLSIFEMSYAVLDVVSE). Residues 61-88 (TTVLSIKKSFVVVVPYKDRSFGQETAMD) lie on the Extracellular side of the membrane. A helical membrane pass occupies residues 89 to 109 (INLIYCGFFGFSMGMFVVIFA). The Cytoplasmic portion of the chain corresponds to 110–128 (YRSFLTTGNTILRKFEGFK). Residues 129–149 (IISWFAYPLFYAIVWILVAWG) form a helical membrane-spanning segment. Residues 150 to 195 (PLASFPEMDIVVRPFLLDELNMTVDEVAYTGRLFYSTIDNSLRYSA) are Extracellular-facing. N-linked (GlcNAc...) asparagine glycosylation is present at asparagine 170. Residues 196–216 (ILTGVLQWVLTASSLFLVIFF) form a helical membrane-spanning segment. Topologically, residues 217–256 (GLRCYFHYGKLVQLTDVQSIRLRQLQNQLFLALVCQATVP) are cytoplasmic. A helical transmembrane segment spans residues 257 to 277 (LILMHIPVTILYTCCVLNIVF). Residues 278 to 279 (NP) are Extracellular-facing. A helical transmembrane segment spans residues 280–300 (FSVATTIALFPAIDPLPTIFI). At 301–344 (VKNYRVALFEFVCPSCLCWSETLKHMGSNRITSYRSNTVNALSM) the chain is on the cytoplasmic side.

The protein belongs to the nematode receptor-like protein str family. In terms of tissue distribution, expressed in the ADL chemosensory neurons.

Its subcellular location is the cell membrane. In terms of biological role, probable G-protein coupled receptor. This is G-protein coupled receptor str-217 from Caenorhabditis elegans.